The chain runs to 502 residues: Potassium channel KAT3 (502 aa).

The Cytoplasmic portion of the chain corresponds to 1–67; sequence MPRSSRMNLW…PYDPRYKVWE (67 aa). Residues 68-88 form a helical membrane-spanning segment; it reads TFLIILVVYSAWICPLEFAFL. Residues 89–95 are Extracellular-facing; sequence RYLPSAP. The helical transmembrane segment at 96–116 threads the bilayer; the sequence is FVVDDVVNGFFAVDIMLTFFV. The Cytoplasmic portion of the chain corresponds to 117–138; the sequence is PFVDKKSYLLVNDPKKIAVRYL. The helical transmembrane segment at 139-159 threads the bilayer; sequence SSWFVFDVCSTVPFHSISLLF. The Extracellular segment spans residues 160 to 169; sequence NEHGHDLGFK. Residues 170-190 traverse the membrane as a helical; Voltage-sensor segment; that stretch reads FLNVLRLWRLRRVSSMFARLE. Residues 191–204 lie on the Cytoplasmic side of the membrane; that stretch reads KDIRFNYAVIRCTK. Residues 205–225 form a helical membrane-spanning segment; that stretch reads LISVTLFAIHCAGCINYLIAD. Residues 226-252 lie on the Extracellular side of the membrane; that stretch reads RYPDPRRTWIGAVMPNFREDGLWIRYV. The segment at residues 253-272 is an intramembrane region (pore-forming); the sequence is TAMYWSITTLTTTGYGDLHA. Residues 273–276 lie on the Extracellular side of the membrane; that stretch reads ENAR. Residues 277–297 traverse the membrane as a helical segment; it reads EMLFGICYMLFNLWLTAYLIG. At 298 to 502 the chain is on the cytoplasmic side; the sequence is NMTNLVVHST…IRSNLQQVNV (205 aa). An a nucleoside 3',5'-cyclic phosphate-binding site is contributed by 381–500; it reads LFKGVSSRFI…DIIRSNLQQV (120 aa).

The protein belongs to the potassium channel family. Plant (TC 1.A.1.4) subfamily.

Its subcellular location is the membrane. Its function is as follows. Probable inward-rectifying potassium channel. Assuming opened or closed conformations in response to the voltage difference across the membrane, the channel is activated by hyperpolarization. This chain is Potassium channel KAT3, found in Oryza sativa subsp. japonica (Rice).